The chain runs to 507 residues: 3-[(3aS,4S,7aS)-7a-methyl-1,5-dioxo-octahydro-1H-inden-4-yl]propanoyl:CoA ligase (507 aa).

ATP-binding positions include 177–185, D391, R406, and K497; that span reads TSGTTGRSK.

The protein belongs to the ATP-dependent AMP-binding enzyme family.

It carries out the reaction 3-[(3aS,4S,7aS)-7a-methyl-1,5-dioxo-octahydro-1H-inden-4-yl]propanoate + ATP + CoA = 3-[(3aS,4S,7aS)-7a-methyl-1,5-dioxo-octahydro-1H-inden-4-yl]propanoyl-CoA + AMP + diphosphate. The catalysed reaction is 5-hydroxy-3-[(3aS,4S,5R,7aS)-7a-methyl-1,5-dioxo-octahydro-1H-inden-4-yl]propanoate + ATP + CoA = 3-[(3aS,4S,5R,7aS)-5-hydroxy-7a-methyl-1-oxo-octahydro-1H-inden-4-yl]propanoyl-CoA + AMP + diphosphate. Involved in the catabolism of the rings C and D of cholesterol. Catalyzes the ATP-dependent CoA thioesterification of 3aalpha-H-4alpha(3'-propanoate)-7abeta-methylhexahydro-1,5-indanedione (HIP) to yield HIP-CoA. It can also use the hydroxylated analogs of HIP, 5alpha-OH HIP and 1beta-OH HIP. It requires that the side chain at C17 is completely removed. This chain is 3-[(3aS,4S,7aS)-7a-methyl-1,5-dioxo-octahydro-1H-inden-4-yl]propanoyl:CoA ligase, found in Mycobacterium tuberculosis (strain ATCC 25618 / H37Rv).